Reading from the N-terminus, the 457-residue chain is Adenylosuccinate synthetase isozyme 2 A (457 aa).

GTP is bound by residues 40–46 (GDEGKGK) and 68–70 (GHT). Aspartate 41 (proton acceptor) is an active-site residue. Positions 41 and 68 each coordinate Mg(2+). Position 41 (aspartate 41) interacts with substrate. IMP-binding positions include 41 to 44 (DEGK), 66 to 69 (NAGH), threonine 163, arginine 177, asparagine 256, threonine 271, and arginine 335. Residue histidine 69 is the Proton donor of the active site. 331-337 (VTTGRKR) contacts substrate. Residues arginine 337, 363 to 365 (KLD), and 445 to 448 (GVGK) contribute to the GTP site.

Belongs to the adenylosuccinate synthetase family. Homodimer. Mg(2+) serves as cofactor.

It localises to the cytoplasm. The protein localises to the mitochondrion. It catalyses the reaction IMP + L-aspartate + GTP = N(6)-(1,2-dicarboxyethyl)-AMP + GDP + phosphate + 2 H(+). Its pathway is purine metabolism; AMP biosynthesis via de novo pathway; AMP from IMP: step 1/2. Its activity is regulated as follows. Inhibited competitively by AMP and IMP and non-competitively by fructose 1,6-bisphosphate. Functionally, plays an important role in the de novo pathway and in the salvage pathway of purine nucleotide biosynthesis. Catalyzes the first committed step in the biosynthesis of AMP from IMP. In Xenopus tropicalis (Western clawed frog), this protein is Adenylosuccinate synthetase isozyme 2 A (adss2-a).